A 2327-amino-acid polypeptide reads, in one-letter code: Genome polyprotein (2327 aa).

The region spanning 1–201 is the Peptidase C28 domain; sequence MNTTDCFIAV…WKASVQRKLK (201 aa). The Cytoplasmic portion of the chain corresponds to 1–1475; the sequence is MNTTDCFIAV…SFVKRAFKRL (1475 aa). Residues C51, H148, and D163 each act as for leader protease activity in the active site. 2 disordered regions span residues 196–218 and 238–265; these read VQRK…QSGN and QLGD…NTQN. G202 carries N-myristoyl glycine; by host lipidation. Composition is skewed to polar residues over residues 204-218 and 238-251; these read GQSS…QSGN and QLGD…SNEG. Low complexity predominate over residues 252-265; it reads STDTTSTHTTNTQN. An antigenic epitope region spans residues 787–795; it reads ALLRAATYY. The Cell attachment site motif lies at 864-866; that stretch reads RGD. One can recognise an SF3 helicase domain in the interval 1184-1348; that stretch reads NVHIANLCKV…DGYKINNKLD (165 aa). 1212–1219 contributes to the ATP binding site; sequence GKSGQGKS. Residues 1476–1496 lie within the membrane without spanning it; it reads KENFEIVALCLTLLANIVIMI. Topologically, residues 1497-2327 are cytoplasmic; it reads RETHKRQKMV…RWVNAVCGDA (831 aa). Residues 1524-1584 are disordered; the sequence is QTLDEAEKNP…PYAGPLERQR (61 aa). The span at 1544–1558 shows a compositional bias: basic and acidic residues; sequence FRERTLPGQKARDDV. 3 positions are modified to O-(5'-phospho-RNA)-tyrosine: Y1576, Y1599, and Y1623. The Peptidase C3 domain maps to 1647–1843; sequence APPTDLQKMV…YCSCVSRSML (197 aa). Residue H1690 is the For protease 3C activity; Proton donor/acceptor of the active site. Catalysis depends on for protease 3C activity residues D1728 and C1807. Residues 1873-1881 carry the Nuclear localization signal motif; it reads MRKTKLAPT. One can recognise a RdRp catalytic domain in the interval 2091 to 2209; sequence RNVWDVDYSA…ASDYDLDFEA (119 aa). The For RdRp activity role is filled by D2195.

This sequence belongs to the picornaviruses polyprotein family. As to quaternary structure, interacts with host ISG15. In terms of assembly, interacts (via R-G-D motif) with host ITGAV/ITGB6. Interacts with host MAVS; this interaction inhibits binding of host TRAF3 to MAVS, thereby suppressing interferon-mediated responses. Forms homooligomers. As to quaternary structure, homohexamer. Interacts with host VIM. Interacts with host BECN1. In terms of assembly, interacts with host DCTN3. Interacts with RNA-dependent RNA polymerase; this interaction allows 3B-1 to binds 2 polymerases and act as a primer. It also allows the recruitment of the RNA-dependent RNA polymerase to host membranes. As to quaternary structure, interacts with RNA-dependent RNA polymerase; this interaction allows 3B-2 to act as a primer. In terms of assembly, interacts with RNA-dependent RNA polymerase; this interaction allows 3B-3 to act as a primer. Interacts with 3B-1; this interaction allows 3B-1 to binds 2 polymerases and act as a primer. It also allows the recruitment of the RNA-dependent RNA polymerase to host membranes. Interacts with 3B-2; this interaction allows 3B-2 to act as a primer. Interacts with 3B-3; this interaction allows 3B-3 to act as a primer. Removes six residues from its own C-terminus, generating sLb(pro). Post-translationally, specific enzymatic cleavages in vivo by the viral proteases yield a variety of precursors and mature proteins. The polyprotein seems to be cotranslationally cleaved at the 2A/2B junction by a ribosomal skip from one codon to the next without formation of a peptide bond. This process would release the L-P1-2A peptide from the translational complex. In terms of processing, during virion maturation, immature virions are rendered infectious following cleavage of VP0 into VP4 and VP2. This maturation seems to be an autocatalytic event triggered by the presence of RNA in the capsid and is followed by a conformational change of the particle. Myristoylation is required during RNA encapsidation and formation of the mature virus particle. Post-translationally, uridylylated by the polymerase and covalently linked to the 5'-end of genomic RNA. These uridylylated forms act as a nucleotide-peptide primer for the polymerase.

Its subcellular location is the host nucleus. The protein resides in the host cytoplasm. It is found in the virion. The protein localises to the host endoplasmic reticulum membrane. It localises to the host cytoplasmic vesicle membrane. The catalysed reaction is Autocatalytically cleaves itself from the polyprotein of the foot-and-mouth disease virus by hydrolysis of a Lys-|-Gly bond, but then cleaves host cell initiation factor eIF-4G at bonds -Gly-|-Arg- and -Lys-|-Arg-.. It catalyses the reaction a ribonucleoside 5'-triphosphate + H2O = a ribonucleoside 5'-diphosphate + phosphate + H(+). The enzyme catalyses RNA(n) + a ribonucleoside 5'-triphosphate = RNA(n+1) + diphosphate. It carries out the reaction Selective cleavage of Gln-|-Gly bond in the poliovirus polyprotein. In other picornavirus reactions Glu may be substituted for Gln, and Ser or Thr for Gly.. Autocatalytically cleaves itself from the polyprotein at the L/VP0 junction. Also cleaves the host translation initiation factors EIF4G1 and EIF4G3, in order to shut off the capped cellular mRNA transcription. Plays a role in counteracting host innate antiviral response using diverse mechanisms. Possesses a deubiquitinase activity acting on both 'Lys-48' and 'Lys-63'-linked polyubiquitin chains. In turn, inhibits the ubiquitination and subsequent activation of key signaling molecules of type I IFN response such as host RIGI, TBK1, TRAF3 and TRAF6. Inhibits host NF-kappa-B activity by inducing a decrease in RELA mRNA levels. Cleaves a peptide bond in the C-terminus of host ISG15, resulting in the damaging of this modifier that can no longer be attached to target proteins. Also cleaves host G3BP1 and G3BP2 in order to inhibit cytoplasmic stress granules assembly. Its function is as follows. Lies on the inner surface of the capsid shell. After binding to the host receptor, the capsid undergoes conformational changes. Capsid protein VP4 is released, capsid protein VP1 N-terminus is externalized, and together, they shape a pore in the host membrane through which the viral genome is translocated into the host cell cytoplasm. After genome has been released, the channel shrinks. Functionally, forms an icosahedral capsid of pseudo T=3 symmetry with capsid proteins VP1 and VP3. The capsid is composed of 60 copies of each capsid protein organized in the form of twelve pentamers and encloses the viral positive strand RNA genome. Upon acidifcation in the endosome, dissociates into pentamers. In terms of biological role, forms an icosahedral capsid of pseudo T=3 symmetry with capsid proteins VP0 and VP3. The capsid is composed of 60 copies of each capsid protein organized in the form of twelve pentamers and encloses the viral positive strand RNA genome. Upon acidifcation in the endosome, dissociates into pentamers. Forms an icosahedral capsid of pseudo T=3 symmetry with capsid proteins VP2 and VP3. The capsid is composed of 60 copies of each capsid protein organized in the form of twelve pentamers and encloses the viral positive strand RNA genome. Mediates cell entry by attachment to an integrin receptor, usually host ITGAV/ITGB6. In addition, targets host MAVS to suppress type I IFN pathway. Upon acidifcation in the endosome, dissociates into pentamers. Its function is as follows. Mediates self-processing of the polyprotein by a translational effect termed 'ribosome skipping'. Mechanistically, 2A-mediated cleavage occurs between the C-terminal glycine and the proline of the downstream protein 2B. In the case of foot-and-mouth disease virus, the 2A oligopeptide is post-translationally 'trimmed' from the C-terminus of the upstream protein 1D by 3C proteinase. Functionally, plays an essential role in the virus replication cycle by acting as a viroporin. Creates a pore in the host endoplasmic reticulum and as a consequence releases Ca2+ in the cytoplasm of infected cell. In turn, high levels of cytoplasmic calcium may trigger membrane trafficking and transport of viral ER-associated proteins to viroplasms, sites of viral genome replication. In terms of biological role, associates with and induces structural rearrangements of intracellular membranes. Triggers host autophagy by interacting with host BECN1 and thereby promotes viral replication. Participates in viral replication and interacts with host DHX9. Displays RNA-binding, nucleotide binding and NTPase activities. May play a role in virion morphogenesis and viral RNA encapsidation by interacting with the capsid protein VP3. Plays important roles in virus replication, virulence and host range. Cooperates with host DDX56 to inhibit IRF3 nuclear translocation and subsequent type I interferon production. Its function is as follows. Covalently linked to the 5'-end of both the positive-strand and negative-strand genomic RNAs. Acts as a genome-linked replication primer. Functionally, cysteine protease that generates mature viral proteins from the precursor polyprotein. In addition to its proteolytic activity, binds to viral RNA and thus influences viral genome replication. RNA and substrate bind cooperatively to the protease. In terms of biological role, RNA-directed RNA polymerase 3D-POL replicates genomic and antigenomic RNA by recognizing replications specific signals. Covalently attaches UMP to a tyrosine of VPg, which is used to prime RNA synthesis. The positive stranded RNA genome is first replicated at virus induced membranous vesicles, creating a dsRNA genomic replication form. This dsRNA is then used as template to synthesize positive stranded RNA genomes. ss(+)RNA genomes are either translated, replicated or encapsidated. In Bos taurus (Bovine), this protein is Genome polyprotein.